Consider the following 424-residue polypeptide: L-glutamine:2-deoxy-scyllo-inosose aminotransferase (424 aa).

The residue at position 202 (K202) is an N6-(pyridoxal phosphate)lysine.

This sequence belongs to the DegT/DnrJ/EryC1 family. L-glutamine:2-deoxy-scyllo-inosose/scyllo-inosose aminotransferase subfamily. Requires pyridoxal 5'-phosphate as cofactor.

The catalysed reaction is 2-deoxy-L-scyllo-inosose + L-glutamine = 2-deoxy-scyllo-inosamine + 2-oxoglutaramate. It carries out the reaction 3-amino-2,3-dideoxy-scyllo-inosose + L-glutamine = 2-deoxystreptamine + 2-oxoglutaramate. It functions in the pathway metabolic intermediate biosynthesis; 2-deoxystreptamine biosynthesis; 2-deoxystreptamine from D-glucose 6-phosphate: step 2/4. It participates in metabolic intermediate biosynthesis; 2-deoxystreptamine biosynthesis; 2-deoxystreptamine from D-glucose 6-phosphate: step 4/4. Its pathway is antibiotic biosynthesis; neomycin biosynthesis. In terms of biological role, catalyzes the PLP-dependent transamination of 2-deoxy-scyllo-inosose (2-DOI) to form 2-deoxy-scyllo-inosamine (2-DOIA) using L-glutamine as the amino donor. Also catalyzes the transamination of 3-amino-2,3-dideoxy-scyllo-inosose (keto-2-DOIA) into 2-deoxystreptamine (2-DOS). In Streptomyces fradiae (Streptomyces roseoflavus), this protein is L-glutamine:2-deoxy-scyllo-inosose aminotransferase (neoB).